The sequence spans 416 residues: Tumor necrosis factor receptor superfamily member 19 (416 aa).

The signal sequence occupies residues 1–29 (MALKVLPLHRTVLFAAILFLLHLACKVSC). The Extracellular segment spans residues 30-170 (ETGDCRQQEF…TVSSPRDTAL (141 aa)). TNFR-Cys repeat units lie at residues 33–72 (DCRQQEFKDRSGNCVLCKQCGPGMELSKECGFGYGEDAQC) and 74–114 (PCRP…DAVC). 8 disulfide bridges follow: Cys-34/Cys-46, Cys-49/Cys-62, Cys-52/Cys-72, Cys-75/Cys-89, Cys-92/Cys-106, Cys-95/Cys-114, Cys-117/Cys-135, and Cys-138/Cys-149. N-linked (GlcNAc...) asparagine glycosylation occurs at Asn-105. One copy of the TNFR-Cys 3; truncated repeat lies at 116 to 149 (DCLPGFYRKTKLVGFQDMECVPCGDPPPPYEPHC). The chain crosses the membrane as a helical span at residues 171-191 (AAVICSALATVLLALLILCVI). The Cytoplasmic segment spans residues 192–416 (YCKRQFMEKK…LAMPTAFQDA (225 aa)). The tract at residues 321–416 (LCDSYPELTG…LAMPTAFQDA (96 aa)) is disordered. 3 stretches are compositionally biased toward polar residues: residues 331-351 (EDTNSLNPENESAASLDSSGG), 360-370 (LESSGNVSEST), and 381-396 (VWEQTLAQDAQRTPSQ).

As to quaternary structure, associates with TRAF1, TRAF2, TRAF3 and TRAF5. Interacts with LINGO1. As to expression, highly expressed in adult brain, and in embryos from day 11-17, but not earlier. Detected in embryonic brain and epithelium, and at lower levels in adult heart, lung and liver. In neonatal mice, mainly in hair follicles and neuron-like cells in the cerebellum, but not in the skin epidermis. Isoform 3 was found in embryonic day 17.5 skin but not in brain and liver.

Its subcellular location is the cell membrane. It is found in the secreted. In terms of biological role, can mediate activation of c-Jun and NF-kappa-B. May promote caspase-independent cell death. Isoform 2 and isoform 3 may act as decoy receptors. The sequence is that of Tumor necrosis factor receptor superfamily member 19 (Tnfrsf19) from Mus musculus (Mouse).